The sequence spans 517 residues: GMP synthase [glutamine-hydrolyzing] (517 aa).

In terms of domain architecture, Glutamine amidotransferase type-1 spans 11 to 202; sequence KIIVLDFGSQ…AFDVCGAKDN (192 aa). The active-site Nucleophile is C88. Active-site residues include H176 and E178. The GMPS ATP-PPase domain occupies 203–392; that stretch reads WTMDDFIKLS…LGLPHDLVWR (190 aa). 230 to 236 is an ATP binding site; sequence SGGVDSS.

As to quaternary structure, homodimer.

The enzyme catalyses XMP + L-glutamine + ATP + H2O = GMP + L-glutamate + AMP + diphosphate + 2 H(+). It participates in purine metabolism; GMP biosynthesis; GMP from XMP (L-Gln route): step 1/1. Functionally, catalyzes the synthesis of GMP from XMP. In Lactobacillus delbrueckii subsp. bulgaricus (strain ATCC 11842 / DSM 20081 / BCRC 10696 / JCM 1002 / NBRC 13953 / NCIMB 11778 / NCTC 12712 / WDCM 00102 / Lb 14), this protein is GMP synthase [glutamine-hydrolyzing].